The following is a 136-amino-acid chain: Probable disulfide formation protein (136 aa).

A helical membrane pass occupies residues 7 to 26; sequence SYALYFAWAISCAGTLISIF. Cys-36 and Cys-39 are disulfide-bonded. The next 2 membrane-spanning stretches (helical) occupy residues 41 to 60 and 67 to 84; these read YQRI…AYRE and YILP…YQVF. Cys-96 and Cys-101 are disulfide-bonded. Residues 109–131 form a helical membrane-spanning segment; that stretch reads SYVTIPMASVVAFGAIVCLLVLT.

It belongs to the DsbB family. BdbC subfamily.

It localises to the cell inner membrane. Functionally, required for disulfide bond formation in some proteins. The protein is Probable disulfide formation protein of Chlamydia pneumoniae (Chlamydophila pneumoniae).